The chain runs to 298 residues: GTPase Era (298 aa).

The region spanning His-8 to Glu-176 is the Era-type G domain. The tract at residues Gly-16–Ser-23 is G1. Gly-16–Ser-23 is a GTP binding site. A G2 region spans residues Gln-42–His-46. The G3 stretch occupies residues Asp-63 to Gly-66. GTP is bound by residues Asp-63–Leu-67 and Asn-125–Asp-128. The G4 stretch occupies residues Asn-125–Asp-128. The segment at Ile-155–Ala-157 is G5. Positions Val-199 to Glu-283 constitute a KH type-2 domain.

Belongs to the TRAFAC class TrmE-Era-EngA-EngB-Septin-like GTPase superfamily. Era GTPase family. As to quaternary structure, monomer.

The protein resides in the cytoplasm. It localises to the cell inner membrane. Functionally, an essential GTPase that binds both GDP and GTP, with rapid nucleotide exchange. Plays a role in 16S rRNA processing and 30S ribosomal subunit biogenesis and possibly also in cell cycle regulation and energy metabolism. This is GTPase Era from Stenotrophomonas maltophilia (strain K279a).